We begin with the raw amino-acid sequence, 342 residues long: tRNA N6-adenosine threonylcarbamoyltransferase (342 aa).

Fe cation is bound by residues His-111 and His-115. Substrate contacts are provided by residues 133-137 (AVSGG), Asp-166, Gly-179, Asp-183, and Asn-272. Asp-300 is a Fe cation binding site.

The protein belongs to the KAE1 / TsaD family. Fe(2+) is required as a cofactor.

It is found in the cytoplasm. The catalysed reaction is L-threonylcarbamoyladenylate + adenosine(37) in tRNA = N(6)-L-threonylcarbamoyladenosine(37) in tRNA + AMP + H(+). Its function is as follows. Required for the formation of a threonylcarbamoyl group on adenosine at position 37 (t(6)A37) in tRNAs that read codons beginning with adenine. Is involved in the transfer of the threonylcarbamoyl moiety of threonylcarbamoyl-AMP (TC-AMP) to the N6 group of A37, together with TsaE and TsaB. TsaD likely plays a direct catalytic role in this reaction. The polypeptide is tRNA N6-adenosine threonylcarbamoyltransferase (Geobacter sp. (strain M21)).